The chain runs to 160 residues: Fimbrial protein (160 aa).

A propeptide spans 1–7 (MKSLQKG) (leader sequence). Phenylalanine 8 is modified (N-methylphenylalanine). A helical transmembrane segment spans residues 8-28 (FTLIELMIVVAIIGILAAFAI).

This sequence belongs to the N-Me-Phe pilin family. As to quaternary structure, the pili are polar flexible filaments of about 5.4 nanometers diameter and 2.5 micrometers average length; they consist of only a single polypeptide chain arranged in a helical configuration of five subunits per turn in the assembled pilus.

Its subcellular location is the fimbrium. The protein resides in the membrane. The polypeptide is Fimbrial protein (fimA) (Dichelobacter nodosus (Bacteroides nodosus)).